Here is a 208-residue protein sequence, read N- to C-terminus: Probable nicotinate-nucleotide adenylyltransferase (208 aa).

This sequence belongs to the NadD family.

It catalyses the reaction nicotinate beta-D-ribonucleotide + ATP + H(+) = deamido-NAD(+) + diphosphate. It functions in the pathway cofactor biosynthesis; NAD(+) biosynthesis; deamido-NAD(+) from nicotinate D-ribonucleotide: step 1/1. In terms of biological role, catalyzes the reversible adenylation of nicotinate mononucleotide (NaMN) to nicotinic acid adenine dinucleotide (NaAD). The polypeptide is Probable nicotinate-nucleotide adenylyltransferase (Trichormus variabilis (strain ATCC 29413 / PCC 7937) (Anabaena variabilis)).